Here is a 2148-residue protein sequence, read N- to C-terminus: Polyketide synthase 1 (2148 aa).

Positions 19 to 261 are N-terminal acylcarrier protein transacylase domain (SAT); sequence FIFGDQSSCN…TPLAVHAPYH (243 aa). The Ketosynthase family 3 (KS3) domain maps to 394–829; it reads ESKIAIIGMS…GGNTALLVED (436 aa). Residues Cys-566, His-701, and His-745 each act as for beta-ketoacyl synthase activity in the active site. The segment at 930 to 1236 is malonyl-CoA:ACP transacylase (MAT) domain; the sequence is FVFSGQGSQY…MRNKDGWQVL (307 aa). The active-site For acyl/malonyl transferase activity is the Ser-1018. Positions 1310 to 1624 are product template (PT) domain; sequence TASVHRMVHE…RKVLNTAMPP (315 aa). Residues 1314-1447 are N-terminal hotdog fold; sequence HRMVHESVEK…SSLHFEQPKV (134 aa). The region spanning 1314–1619 is the PKS/mFAS DH domain; sequence HRMVHESVEK…FQGIPRKVLN (306 aa). His-1346 (proton acceptor; for dehydratase activity) is an active-site residue. Residues 1474–1619 are C-terminal hotdog fold; the sequence is LNSRMSSGVI…FQGIPRKVLN (146 aa). Asp-1533 (proton donor; for dehydratase activity) is an active-site residue. The interval 1619 to 1655 is disordered; that stretch reads NTAMPPPKSQNEAPVRSGPAKPAAKPPRSASSEHSGH. Residues 1634–1650 are compositionally biased toward low complexity; sequence RSGPAKPAAKPPRSASS. One can recognise a Carrier 1 domain in the interval 1678-1752; that stretch reads RNPMLPVFKI…DLAAQLGLDT (75 aa). Ser-1712 carries the O-(pantetheine 4'-phosphoryl)serine modification. Low complexity predominate over residues 1755-1790; sequence SDQSSGQSSSSGGLSPRSDSIGEITSSVTTPPSLSP. Positions 1755–1796 are disordered; it reads SDQSSGQSSSSGGLSPRSDSIGEITSSVTTPPSLSPRGSVSG. The Carrier 2 domain occupies 1793-1870; it reads SVSGSQCKDV…SFKHMFQQGH (78 aa). Residue Ser-1830 is modified to O-(pantetheine 4'-phosphoryl)serine. Residues 1882–2146 form a thioesterase (TE) domain region; the sequence is LKQYRATSTL…ERVAAFIRST (265 aa). Ser-1973 (for thioesterase activity) is an active-site residue.

Its pathway is pigment biosynthesis. Functionally, polyketide synthase; part of the Pks1 gene cluster that mediates the biosynthesis of an anthraquinone derivative pigment that contributes to conidial pigmentation that provides protection from UV radiation, heat and cold stress. The polyketide synthase Pks1 produces 1-acetyl-2,4,6,8-tetrahydroxy-9,10-anthraquinone though condensation of acetyl-CoA with malonyl-CoA. The dehydratase EthD and the laccase Mlac1 further convert the anthraquinone derivative into the final conidial pigment. The chain is Polyketide synthase 1 from Metarhizium robertsii (strain ARSEF 23 / ATCC MYA-3075) (Metarhizium anisopliae (strain ARSEF 23)).